The sequence spans 129 residues: Virion-associated protein (129 aa).

2 coiled-coil regions span residues 1-31 (MANL…ILEL) and 38-59 (IKES…LIND). The capsid binding stretch occupies residues 122–129 (PAGWPNQF).

The protein belongs to the caulimovirus ORF III family. Homotetramer, through coiled-coil domain. Homotrimer when bound on icosehadral capsid. Interacts with capsid protein, and with movement protein.

The protein localises to the virion. Its subcellular location is the host cell junction. It localises to the host plasmodesma. In terms of biological role, plays a role in virus cell-to-cell and plant-to-plant transmission. Interacts with virion icosahedral capsid and movement protein, thereby facilitating virion cell-to-cell transmission through plasmodesmata opened by viral movement protein. Also interacts with aphid transmission factor, attaching the virion to aphid stylet when the animal feeds on an virus infected plant. Aphid saliva may later detach the virion, inducing release of infectious particles when the animal feeds on a new plant. The polypeptide is Virion-associated protein (Cauliflower mosaic virus (strain Strasbourg) (CaMV)).